A 387-amino-acid polypeptide reads, in one-letter code: MADTKKNDNYAIDMDKLDAESDRFRPPPQPQPRHSSSSHSQSISNSPVLPILSYCASSILMTVTNKYVLSGVQFNLNFFLLCVQSVVCIIAIQTCKSMGLINYRDFNSDEAKKWFPISLLLIGMIYTGTKALKFLSIPVYTIFKNLTIILIAYGEVLWFGGSVTGMALFSFGLMVLSSVIAAWADIKHALDTSGFSGAEATSKISTLNAGYIWMLINCLCTSTYILGMRKRIKLTNFKDFDTMFYNNLLSIPILMIGSFIVEDWSSENINKNFPIETRNSLIFAMIFSGLSSVFISYTSAWCVRVTSSTTYSMVGALNKLPIALSGLIFFGDPVTVPSVSAIVVGFISGIVYSLAKVKQNAKPRTGVLPTTNPVSASTQSMRDGLKS.

A compositionally biased stretch (basic and acidic residues) spans 1-25 (MADTKKNDNYAIDMDKLDAESDRFR). Topologically, residues 1 to 42 (MADTKKNDNYAIDMDKLDAESDRFRPPPQPQPRHSSSSHSQS) are cytoplasmic. The interval 1–45 (MADTKKNDNYAIDMDKLDAESDRFRPPPQPQPRHSSSSHSQSISN) is disordered. Residues 32–45 (PRHSSSSHSQSISN) show a composition bias toward low complexity. The helical transmembrane segment at 43-63 (ISNSPVLPILSYCASSILMTV) threads the bilayer. The Lumenal portion of the chain corresponds to 64–71 (TNKYVLSG). The helical transmembrane segment at 72–92 (VQFNLNFFLLCVQSVVCIIAI) threads the bilayer. At 93 to 112 (QTCKSMGLINYRDFNSDEAK) the chain is on the cytoplasmic side. Residues 113 to 129 (KWFPISLLLIGMIYTGT) form a helical membrane-spanning segment. The Lumenal segment spans residues 130 to 136 (KALKFLS). A helical membrane pass occupies residues 137 to 153 (IPVYTIFKNLTIILIAY). The Cytoplasmic segment spans residues 154 to 162 (GEVLWFGGS). The chain crosses the membrane as a helical span at residues 163-184 (VTGMALFSFGLMVLSSVIAAWA). Residues 185-206 (DIKHALDTSGFSGAEATSKIST) are Lumenal-facing. A helical membrane pass occupies residues 207–227 (LNAGYIWMLINCLCTSTYILG). Topologically, residues 228-241 (MRKRIKLTNFKDFD) are cytoplasmic. Residues 242 to 262 (TMFYNNLLSIPILMIGSFIVE) traverse the membrane as a helical segment. The Lumenal segment spans residues 263 to 280 (DWSSENINKNFPIETRNS). A helical membrane pass occupies residues 281–301 (LIFAMIFSGLSSVFISYTSAW). At 302–309 (CVRVTSST) the chain is on the cytoplasmic side. The helical transmembrane segment at 310–329 (TYSMVGALNKLPIALSGLIF) threads the bilayer. The Lumenal portion of the chain corresponds to 330–332 (FGD). Residues 333–355 (PVTVPSVSAIVVGFISGIVYSLA) traverse the membrane as a helical segment. Over 356–387 (KVKQNAKPRTGVLPTTNPVSASTQSMRDGLKS) the chain is Cytoplasmic. The disordered stretch occupies residues 366–387 (GVLPTTNPVSASTQSMRDGLKS). Residues 368–381 (LPTTNPVSASTQSM) show a composition bias toward polar residues.

It belongs to the TPT transporter family. SLC35D subfamily. In terms of assembly, homooligomer.

The protein resides in the golgi apparatus membrane. Its subcellular location is the cytoplasmic vesicle membrane. The protein localises to the endoplasmic reticulum membrane. Functionally, involved in the import of GDP-mannose from the cytoplasm into the Golgi lumen. The sequence is that of GDP-mannose transporter (VRG4) from Coccidioides immitis (strain RS) (Valley fever fungus).